A 387-amino-acid chain; its full sequence is Putative ribosomal RNA large subunit methyltransferase MJ1649 (387 aa).

A PUA domain is found at 5-81 (LIKLEIDRRA…EEIDYDFFYK (77 aa)).

It belongs to the methyltransferase superfamily. RlmI family.

It localises to the cytoplasm. The polypeptide is Putative ribosomal RNA large subunit methyltransferase MJ1649 (Methanocaldococcus jannaschii (strain ATCC 43067 / DSM 2661 / JAL-1 / JCM 10045 / NBRC 100440) (Methanococcus jannaschii)).